The chain runs to 321 residues: Thymidylate synthase (321 aa).

Residues 1–32 form a disordered region; it reads MVLTPTKDGPDQESMPLPADNGESPSKQQAPV. Residues Ser-24 and Ser-26 each carry the phosphoserine modification. Tyr-39 is modified (phosphotyrosine). DUMP contacts are provided by residues Arg-56 and 181 to 182; that span reads RR. Cys-201 (nucleophile) is an active-site residue. Residue Tyr-208 is modified to Phosphotyrosine. Phosphoserine is present on Ser-210. Residues 223-226, Asn-234, and 264-266 contribute to the dUMP site; these read RSAD and HVY. (6R)-5,10-methylene-5,6,7,8-tetrahydrofolate is bound at residue Asp-226. (6R)-5,10-methylene-5,6,7,8-tetrahydrofolate is bound at residue Ala-320.

This sequence belongs to the thymidylate synthase family. As to quaternary structure, homodimer.

The enzyme catalyses dUMP + (6R)-5,10-methylene-5,6,7,8-tetrahydrofolate = 7,8-dihydrofolate + dTMP. It participates in pyrimidine metabolism; dTTP biosynthesis. This Drosophila melanogaster (Fruit fly) protein is Thymidylate synthase (Ts).